The sequence spans 607 residues: Probable CoA ligase CCL8 (607 aa).

Residues 236–244, 391–396, D474, 486–489, and K591 contribute to the ATP site; these read TSGTTGKPK, ERYGMT, and ILGR. The interval 305–391 is SBD1; sequence SVRGIWQRWR…QTITGHRLLE (87 aa). Positions 392–453 are SBD2; that stretch reads RYGMTEFVMA…VRSPSLFKEY (62 aa).

The protein belongs to the ATP-dependent AMP-binding enzyme family. In terms of tissue distribution, mostly expressed at low levels in glandular trichomes (lupulin glands) after flowering, and, to a lower extent, in stems, leaves, flowers and cones.

It is found in the cytoplasm. It localises to the cytosol. In Humulus lupulus (European hop), this protein is Probable CoA ligase CCL8.